The following is a 246-amino-acid chain: MRSGVIARKVGMTRVFTDAGEHVPVTVLQIDQCQVVAHRTTEKDGYVALQVGVGKAKVKNVSQAERGRFAVAKVEPKKKLAEFRVSEDALIPVGAEITADHFIPGQFVDVTGTTTGKGFAGGMKRWNFGGLRATHGVSISHRSIGSTGGRQDPGKTFKNKKMPGHLGVERVTTQNLKVVRTDPERGLILVEGAVPGVAGGWIQVRDSVKRKLPADVPLPGKFRENGSAGASQVEAAPEAPASEENA.

Disordered regions lie at residues 140–162 (SHRS…NKKM) and 215–246 (DVPL…EENA). Gln151 bears the N5-methylglutamine mark. Positions 234 to 246 (EAAPEAPASEENA) are enriched in low complexity.

This sequence belongs to the universal ribosomal protein uL3 family. As to quaternary structure, part of the 50S ribosomal subunit. Forms a cluster with proteins L14 and L19. Methylated by PrmB.

Functionally, one of the primary rRNA binding proteins, it binds directly near the 3'-end of the 23S rRNA, where it nucleates assembly of the 50S subunit. The sequence is that of Large ribosomal subunit protein uL3 from Methylorubrum populi (strain ATCC BAA-705 / NCIMB 13946 / BJ001) (Methylobacterium populi).